Reading from the N-terminus, the 244-residue chain is Ribosome-inactivating protein cucurmosin (244 aa).

Residues Y70, Y109, E158, and R161 contribute to the active site. Residues N189 and N225 are each glycosylated (N-linked (GlcNAc...) asparagine).

The protein belongs to the ribosome-inactivating protein family. Type 1 RIP subfamily. Post-translationally, the N-linked glycan consists of GlcNAc2Man3Xyl.

The catalysed reaction is Endohydrolysis of the N-glycosidic bond at one specific adenosine on the 28S rRNA.. Its function is as follows. Has cytotoxic activity towards cancer cells, but not normal cells. Inhibits the growth of the human leukemia cell line K562, the murine melanoma cell line B16 and the lung adenocarcinoma cell line A549 with IC(50) values of 88.1 nM, 63.4 nM and 359.3 nM respectively. In Cucurbita moschata (Winter crookneck squash), this protein is Ribosome-inactivating protein cucurmosin.